Here is a 359-residue protein sequence, read N- to C-terminus: Alanine racemase (359 aa).

The active-site Proton acceptor; specific for D-alanine is the Lys34. Lys34 bears the N6-(pyridoxal phosphate)lysine mark. Arg129 provides a ligand contact to substrate. Tyr256 acts as the Proton acceptor; specific for L-alanine in catalysis. Residue Met304 coordinates substrate.

Belongs to the alanine racemase family. The cofactor is pyridoxal 5'-phosphate.

The enzyme catalyses L-alanine = D-alanine. It participates in amino-acid biosynthesis; D-alanine biosynthesis; D-alanine from L-alanine: step 1/1. Catalyzes the interconversion of L-alanine and D-alanine. May also act on other amino acids. This Photobacterium profundum (strain SS9) protein is Alanine racemase (alr).